A 461-amino-acid chain; its full sequence is Signal recognition particle receptor FtsY (461 aa).

Residues Phe105–Glu138 form a TPR repeat. GTP-binding positions include Gly267 to Thr274, Asp349 to Arg353, and Thr413 to Asp416.

Belongs to the GTP-binding SRP family. FtsY subfamily. In terms of assembly, part of the signal recognition particle protein translocation system, which is composed of SRP and FtsY.

It is found in the cell inner membrane. Its subcellular location is the cytoplasm. The enzyme catalyses GTP + H2O = GDP + phosphate + H(+). In terms of biological role, involved in targeting and insertion of nascent membrane proteins into the cytoplasmic membrane. Acts as a receptor for the complex formed by the signal recognition particle (SRP) and the ribosome-nascent chain (RNC). In Aquifex aeolicus (strain VF5), this protein is Signal recognition particle receptor FtsY.